Consider the following 463-residue polypeptide: Heterogeneous nuclear ribonucleoprotein K (463 aa).

Methionine 1 is modified (N-acetylmethionine). The tract at residues 1 to 37 (METEQPEETFPNTETNGEFGKRPAEDMEEEQAFKRSR) is disordered. A necessary for interaction with DDX1 region spans residues 1–276 (METEQPEETF…GRGGRPMPPS (276 aa)). Over residues 19–37 (FGKRPAEDMEEEQAFKRSR) the composition is skewed to basic and acidic residues. At lysine 34 the chain carries N6-acetyllysine; alternate. Lysine 34 is covalently cross-linked (Glycyl lysine isopeptide (Lys-Gly) (interchain with G-Cter in SUMO1); alternate). Lysine 34 is covalently cross-linked (Glycyl lysine isopeptide (Lys-Gly) (interchain with G-Cter in SUMO2); alternate). The residue at position 36 (serine 36) is a Phosphoserine. A Phosphothreonine modification is found at threonine 39. Residues 42 to 104 (MVELRILLQS…ETIGEILKKI (63 aa)) form the KH 1 domain. Glycyl lysine isopeptide (Lys-Gly) (interchain with G-Cter in SUMO2) cross-links involve residues lysine 52 and lysine 60. Repeat copies occupy residues 54–76 (AGAV…NASV) and 59–62 (GKGG). The interval 54–421 (AGAVIGKGGK…QIRHESGASI (368 aa)) is 2 X 22 AA approximate repeats. Residues 59–407 (GKGGKNIKAL…LAGSIIGKGG (349 aa)) are 5 X 4 AA repeats of G-X-G-G. 2 positions are modified to phosphoserine: serine 75 and serine 116. The KH 2 domain occupies 144-209 (DCELRLLIHQ…DRVVECIKII (66 aa)). Lysine 163 is covalently cross-linked (Glycyl lysine isopeptide (Lys-Gly) (interchain with G-Cter in SUMO1); alternate). Lysine 163 is covalently cross-linked (Glycyl lysine isopeptide (Lys-Gly) (interchain with G-Cter in SUMO2); alternate). N6-acetyllysine is present on lysine 198. Residues 209-337 (ILDLISESPI…RPGDRYDGMV (129 aa)) are interaction with ZIK1. Phosphoserine occurs at positions 214 and 216. Residue lysine 219 forms a Glycyl lysine isopeptide (Lys-Gly) (interchain with G-Cter in SUMO2); alternate linkage. Residue lysine 219 is modified to N6-succinyllysine; alternate. The RNA-binding RGG-box stretch occupies residues 236–273 (YGGFTMMFDDRRGRPVGFPMRGRGGFDRMPPGRGGRPM). Repeat copies occupy residues 245–250 (DRRGRP), 257–260 (GRGG), and 267–270 (GRGG). The interval 245–329 (DRRGRPVGFP…LMAYDRRGRP (85 aa)) is 2 X 6 AA repeats of D-R-R-G-R-P. The tract at residues 250–329 (PVGFPMRGRG…LMAYDRRGRP (80 aa)) is disordered. The segment covering 252 to 266 (GFPMRGRGGFDRMPP) has biased composition (low complexity). Over residues 276–285 (SRRDYDDMSP) the composition is skewed to basic and acidic residues. Serine 284 bears the Phosphoserine mark. One copy of the 3-4 repeat lies at 295–298 (GRGG). An Omega-N-methylarginine modification is found at arginine 316. Residues 324-329 (DRRGRP) form a 2-2 repeat. Position 377 is an omega-N-methylarginine (arginine 377). Serine 379 bears the Phosphoserine mark. A Phosphotyrosine modification is found at tyrosine 380. Positions 387–451 (IITTQVTIPK…DQIQNAQYLL (65 aa)) constitute a KH 3 domain. Repeat copies occupy residues 399–421 (AGSI…GASI) and 404–407 (GKGG). Lysine 405 is subject to N6-acetyllysine; alternate. Lysine 405 participates in a covalent cross-link: Glycyl lysine isopeptide (Lys-Gly) (interchain with G-Cter in SUMO2); alternate. At serine 420 the chain carries Phosphoserine. Residue lysine 422 forms a Glycyl lysine isopeptide (Lys-Gly) (interchain with G-Cter in SUMO1); alternate linkage. Residue lysine 422 forms a Glycyl lysine isopeptide (Lys-Gly) (interchain with G-Cter in SUMO2); alternate linkage. Lysine 422 is covalently cross-linked (Glycyl lysine isopeptide (Lys-Gly) (interchain with G-Cter in SUMO); alternate).

Identified in the spliceosome C complex. Interacts with ANKRD28, RBM42 and ZIK1. Interacts with DDX1. Interacts with MDM2; this interaction leads to ubiquitination and proteasomal degradation. Interacts with p53/TP53. Interacts with BRDT. Interacts with IVNS1ABP. Interacts with PPIA/CYPA. Part of a transcription inhibitory ribonucleoprotein complex composed at least of the circular RNA circZNF827, ZNF827 and HNRNPL. Sumoylated by CBX4. Sumoylation is increased upon DNA damage, such as that produced by doxorubicin, etoposide, UV light and camptothecin, due to enhanced CBX4 phosphorylation by HIPK2 under these conditions. Post-translationally, ubiquitinated by MDM2. Doxorubicin treatment does not affect monoubiquitination, but slightly decreases HNRNPK poly-ubiquitination. In terms of processing, O-glycosylated (O-GlcNAcylated), in a cell cycle-dependent manner.

It is found in the cytoplasm. It localises to the nucleus. The protein localises to the nucleoplasm. Its subcellular location is the cell projection. The protein resides in the podosome. In terms of biological role, one of the major pre-mRNA-binding proteins. Binds tenaciously to poly(C) sequences. Likely to play a role in the nuclear metabolism of hnRNAs, particularly for pre-mRNAs that contain cytidine-rich sequences. Can also bind poly(C) single-stranded DNA. Plays an important role in p53/TP53 response to DNA damage, acting at the level of both transcription activation and repression. When sumoylated, acts as a transcriptional coactivator of p53/TP53, playing a role in p21/CDKN1A and 14-3-3 sigma/SFN induction. As far as transcription repression is concerned, acts by interacting with long intergenic RNA p21 (lincRNA-p21), a non-coding RNA induced by p53/TP53. This interaction is necessary for the induction of apoptosis, but not cell cycle arrest. As part of a ribonucleoprotein complex composed at least of ZNF827, HNRNPL and the circular RNA circZNF827 that nucleates the complex on chromatin, may negatively regulate the transcription of genes involved in neuronal differentiation. The polypeptide is Heterogeneous nuclear ribonucleoprotein K (HNRNPK) (Oryctolagus cuniculus (Rabbit)).